The following is a 315-amino-acid chain: Calumenin (315 aa).

Residues 1–19 (MDLRQFLMCLSLCTAFALS) form the signal peptide. The residue at position 44 (Ser-44) is a Phosphoserine. Tyr-47 bears the Phosphotyrosine mark. At Thr-65 the chain carries Phosphothreonine. EF-hand domains follow at residues 68 to 103 (ESKE…AQKR), 104 to 139 (WIYE…YVLD), 151 to 186 (QMMV…EEYD), 188 to 223 (MKDI…HDGN), 229 to 264 (WVKT…SDYD), and 265 to 300 (HAEA…FVGS). The residue at position 69 (Ser-69) is a Phosphoserine; by FAM20C. Residues Asp-81, Asp-83, Asp-85, Glu-92, Asp-117, Asn-119, Asp-121, and Glu-128 each coordinate Ca(2+). N-linked (GlcNAc...) (complex) asparagine glycosylation is present at Asn-131. Asp-164 lines the Ca(2+) pocket. The residue at position 165 (Lys-165) is an N6-acetyllysine. Ca(2+)-binding residues include Asp-166, Asp-168, Glu-175, Asp-201, Asn-203, Asp-205, Glu-212, Asp-242, Asn-244, Asp-246, Lys-248, and Glu-253. Thr-254 is subject to Phosphothreonine. A phosphoserine mark is found at Ser-261 and Ser-277. Ca(2+) is bound by residues Asp-278, Asn-280, Asp-282, Lys-284, and Glu-289. The Prevents secretion from ER signature appears at 312 to 315 (HDEF).

Belongs to the CREC family. Interacts with GGCX. Ubiquitously expressed. Expressed at high levels in heart, placenta and skeletal muscle, at lower levels in lung, kidney and pancreas and at very low levels in brain and liver.

The protein localises to the endoplasmic reticulum membrane. Its subcellular location is the golgi apparatus. The protein resides in the secreted. It is found in the melanosome. It localises to the sarcoplasmic reticulum lumen. Its function is as follows. Involved in regulation of vitamin K-dependent carboxylation of multiple N-terminal glutamate residues. Seems to inhibit gamma-carboxylase GGCX. Binds 7 calcium ions with a low affinity. In Homo sapiens (Human), this protein is Calumenin (CALU).